An 832-amino-acid chain; its full sequence is G-type lectin S-receptor-like serine/threonine-protein kinase RLK1 (832 aa).

The first 24 residues, 1-24 (MGSLSCSIIHLVLILQLQTFFVFS), serve as a signal peptide directing secretion. The Extracellular portion of the chain corresponds to 25-461 (QNIRNGSVPV…VPVTGNRAKK (437 aa)). N29, N92, N100, N178, N240, and N251 each carry an N-linked (GlcNAc...) asparagine glycan. Positions 37 to 157 (SLTASESQQI…GSEDSDEVLW (121 aa)) constitute a Bulb-type lectin domain. An EGF-like; atypical domain is found at 299 to 349 (RDNMCSPDDALGNMACGYNNICSLGNNKRPKCECPERFVLKDPSNEYGDCL). 3 cysteine pairs are disulfide-bonded: C303-C320, C314-C330, and C332-C348. The PAN domain maps to 357-446 (CRPENQTANS…DSDTFIKVRN (90 aa)). N361 is a glycosylation site (N-linked (GlcNAc...) asparagine). 2 cysteine pairs are disulfide-bonded: C397–C420 and C401–C407. The N-linked (GlcNAc...) asparagine glycan is linked to N446. The helical transmembrane segment at 462–482 (LDWLIIACSVLLGTSAFVIFD) threads the bilayer. Residues 483-832 (TSCSYRKTKK…SLSSDPVSLV (350 aa)) lie on the Cytoplasmic side of the membrane. In terms of domain architecture, Protein kinase spans 531-803 (RDFTEELGRG…NVTQMLEGVI (273 aa)). ATP-binding positions include 537 to 545 (LGRGAFGIV) and K563. A caM-binding region spans residues 622-638 (RRPRPSWEDRKNIAVAI). D657 functions as the Proton acceptor in the catalytic mechanism.

The protein belongs to the protein kinase superfamily. Ser/Thr protein kinase family.

It is found in the cell membrane. It carries out the reaction L-seryl-[protein] + ATP = O-phospho-L-seryl-[protein] + ADP + H(+). The enzyme catalyses L-threonyl-[protein] + ATP = O-phospho-L-threonyl-[protein] + ADP + H(+). The protein is G-type lectin S-receptor-like serine/threonine-protein kinase RLK1 (RLK1) of Arabidopsis thaliana (Mouse-ear cress).